The following is a 435-amino-acid chain: Hydrogenobyrinate a,c-diamide synthase (435 aa).

The GATase cobBQ-type domain maps to R239–Q422. C321 functions as the Nucleophile in the catalytic mechanism.

The protein belongs to the CobB/CbiA family. Requires Mg(2+) as cofactor.

The enzyme catalyses hydrogenobyrinate + 2 L-glutamine + 2 ATP + 2 H2O = hydrogenobyrinate a,c-diamide + 2 L-glutamate + 2 ADP + 2 phosphate + 2 H(+). It functions in the pathway cofactor biosynthesis; adenosylcobalamin biosynthesis; cob(II)yrinate a,c-diamide from precorrin-2 (aerobic route): step 9/10. Catalyzes the ATP-dependent amidation of the two carboxylate groups at positions a and c of hydrogenobyrinate, using either L-glutamine or ammonia as the nitrogen source. The polypeptide is Hydrogenobyrinate a,c-diamide synthase (Pseudomonas aeruginosa (strain ATCC 15692 / DSM 22644 / CIP 104116 / JCM 14847 / LMG 12228 / 1C / PRS 101 / PAO1)).